The following is a 321-amino-acid chain: Cytochrome c biogenesis protein CcsA (321 aa).

8 helical membrane-spanning segments follow: residues 17–37, 46–63, 71–91, 98–118, 143–163, 225–245, 259–273, and 286–306; these read VVSI…IIGL, MTTF…WIYL, LYES…VPYF, LKAI…SGLL, MVLG…LLVI, IISL…VWAN, TWAF…IYLH, and AIVA…VNLL.

It belongs to the CcmF/CycK/Ccl1/NrfE/CcsA family. May interact with Ccs1.

The protein resides in the plastid. It localises to the chloroplast thylakoid membrane. Required during biogenesis of c-type cytochromes (cytochrome c6 and cytochrome f) at the step of heme attachment. The protein is Cytochrome c biogenesis protein CcsA of Morus indica (Mulberry).